The sequence spans 313 residues: Olfactory receptor 51A4 (313 aa).

Topologically, residues 1-27 (MSIINTSYVEITTFFLVGMPGLEYAHI) are extracellular. Residue Asn5 is glycosylated (N-linked (GlcNAc...) asparagine). Residues 28–48 (WISIPICSMYLIAILGNGTIL) form a helical membrane-spanning segment. Over 49–56 (FIIKTEPS) the chain is Cytoplasmic. A helical transmembrane segment spans residues 57–77 (LHEPMYYFLSMLAMSDLGLSL). At 78–101 (SSLPTVLSIFLFNAPEISSNACFA) the chain is on the extracellular side. A disulfide bridge links Cys99 with Cys191. The chain crosses the membrane as a helical span at residues 102-122 (QEFFIHGFSVLESSVLLIMSF). Topologically, residues 123–141 (DRFLAIHNPLRYTSILTTV) are cytoplasmic. The chain crosses the membrane as a helical span at residues 142–162 (RVAQIGIVFSFKSMLLVLPFP). The Extracellular segment spans residues 163–198 (FTLRNLRYCKKNQLSHSYCLHQDVMKLACSDNRIDV). Residues 199-218 (IYGFFGALCLMVDFILIAVS) traverse the membrane as a helical segment. Over 219 to 238 (YTLILKTVLGIASKKEQLKA) the chain is Cytoplasmic. The chain crosses the membrane as a helical span at residues 239–259 (LNTCVSHICAVIIFYLPIINL). The Extracellular portion of the chain corresponds to 260–274 (AVVHRFARHVSPLIN). Residues 275–295 (VLMANVLLLVPPLTNPIVYCV) traverse the membrane as a helical segment. The Cytoplasmic segment spans residues 296-313 (KTKQIRVRVVAKLCQRKI).

Belongs to the G-protein coupled receptor 1 family.

The protein resides in the cell membrane. Its function is as follows. Odorant receptor. The sequence is that of Olfactory receptor 51A4 (OR51A4) from Homo sapiens (Human).